The following is a 527-amino-acid chain: Type II methyltransferase M.XamI (527 aa).

Belongs to the N(4)/N(6)-methyltransferase family.

The enzyme catalyses a 2'-deoxyadenosine in DNA + S-adenosyl-L-methionine = an N(6)-methyl-2'-deoxyadenosine in DNA + S-adenosyl-L-homocysteine + H(+). In terms of biological role, a gamma subtype methylase that recognizes the double-stranded sequence 5'-GTCGAC-3', possibly methylates A-5 on both strands, and protects the DNA from cleavage by the XamI endonuclease. The polypeptide is Type II methyltransferase M.XamI (Xanthomonas campestris pv. amaranthicola).